Here is a 201-residue protein sequence, read N- to C-terminus: Recombination protein RecR (201 aa).

A C4-type zinc finger spans residues 60–75 (CQICGNIDTRDPCTIC). The region spanning 83–178 (TLLVVVETVA…KITRLAHGVP (96 aa)) is the Toprim domain.

It belongs to the RecR family.

May play a role in DNA repair. It seems to be involved in an RecBC-independent recombinational process of DNA repair. It may act with RecF and RecO. This chain is Recombination protein RecR, found in Beijerinckia indica subsp. indica (strain ATCC 9039 / DSM 1715 / NCIMB 8712).